The sequence spans 326 residues: Lipid droplet-associated hydrolase (326 aa).

The Nucleophile role is filled by serine 140. Active-site charge relay system residues include aspartate 272 and histidine 301.

Belongs to the AB hydrolase superfamily. LDAH family. In terms of tissue distribution, expressed in liver, adrenal gland, prostate, spleen, kidney, brown and white adipose tissue, testis and to a lesser extent in brain (at protein level). Expressed in peritoneal macrophages and bone marrow-derived macrophages (at protein level). Highly expressed in macrophage and foam cell-rich areas in atherosclerotic lesions (at protein level). mRNA, but no protein, expressed in heart and muscle.

Its subcellular location is the lipid droplet. The protein resides in the endoplasmic reticulum. The enzyme catalyses a cholesterol ester + H2O = cholesterol + a fatty acid + H(+). Functionally, probable serine lipid hydrolase associated with lipid droplets. Has low cholesterol esterase activity. Appears to lack triglyceride lipase activity. Involved in cholesterol and triglyceride homeostasis; stimulates cellular triglyceride accumulation and cellular cholesterol release. Acts antagonistically with PNPLA2/ATGL in regulation of cellular lipid stores. May regulate triglyceride accumulation indirectly through stimulation of PNPLA2/ATGL ubiquitination and proteasomal degradation. Promotes microtubule-dependent lipid droplet fusion. Highly expressed in macrophage-rich areas in atherosclerotic lesions, suggesting that it could promote cholesterol ester turnover in macrophages. In terms of biological role, stimulates cellular triglyceride accumulation and lipid droplet fusion. Its function is as follows. Associates with lipid droplets but does not stimulate cellular triglyceride accumulation, lipid droplet fusion or ATGL proteasomal degradation. The chain is Lipid droplet-associated hydrolase from Mus musculus (Mouse).